A 723-amino-acid polypeptide reads, in one-letter code: Catalase-peroxidase (723 aa).

The segment at residues 96-225 is a cross-link (tryptophyl-tyrosyl-methioninium (Trp-Tyr) (with M-251)); sequence WHAAGSYRVA…LAAVMMGLIY (130 aa). His-97 acts as the Proton acceptor in catalysis. Residues 225 to 251 constitute a cross-link (tryptophyl-tyrosyl-methioninium (Tyr-Met) (with W-96)); sequence YVNPEGVDGNPDPLKTAEDVRVTFARM. His-266 is a binding site for heme b.

This sequence belongs to the peroxidase family. Peroxidase/catalase subfamily. As to quaternary structure, homodimer or homotetramer. It depends on heme b as a cofactor. Formation of the three residue Trp-Tyr-Met cross-link is important for the catalase, but not the peroxidase activity of the enzyme.

It carries out the reaction H2O2 + AH2 = A + 2 H2O. It catalyses the reaction 2 H2O2 = O2 + 2 H2O. Bifunctional enzyme with both catalase and broad-spectrum peroxidase activity. This chain is Catalase-peroxidase, found in Alkalilimnicola ehrlichii (strain ATCC BAA-1101 / DSM 17681 / MLHE-1).